The primary structure comprises 126 residues: Nucleoside diphosphate kinase B (126 aa).

ATP-binding residues include Lys6, Phe37, Thr68, Arg79, and Asn89. The active-site Pros-phosphohistidine intermediate is the His92.

Belongs to the NDK family. It depends on Mg(2+) as a cofactor.

It is found in the cytoplasm. It localises to the nucleus. The protein resides in the cell projection. The protein localises to the lamellipodium. Its subcellular location is the ruffle. It carries out the reaction a 2'-deoxyribonucleoside 5'-diphosphate + ATP = a 2'-deoxyribonucleoside 5'-triphosphate + ADP. The catalysed reaction is a ribonucleoside 5'-diphosphate + ATP = a ribonucleoside 5'-triphosphate + ADP. Its function is as follows. Major role in the synthesis of nucleoside triphosphates other than ATP. This Macruronus magellanicus (Patagonian grenadier) protein is Nucleoside diphosphate kinase B (nme2).